Here is a 230-residue protein sequence, read N- to C-terminus: Cutinase (230 aa).

The first 16 residues, 1-16 (MKFFALTTFLAATASA), serve as a signal peptide directing secretion. Cysteines 47 and 125 form a disulfide. The active-site Nucleophile is the S136. C187 and C194 form a disulfide bridge. The active site involves D191. H204 functions as the Proton donor/acceptor in the catalytic mechanism.

It belongs to the cutinase family. The 2 disulfide bonds play a critical role in holding the catalytic residues in juxta-position; reduction of the disulfide bridges results in the complete inactivation of the enzyme.

Its subcellular location is the secreted. It carries out the reaction cutin + H2O = cutin monomers.. In terms of biological role, catalyzes the hydrolysis of complex carboxylic polyesters found in the cell wall of plants. Degrades cutin, a macromolecule that forms the structure of the plant cuticle. Allows pathogenic fungi to penetrate through the cuticular barrier into the host plant during the initial stage of fungal infection. In Fusarium solani subsp. cucurbitae (Neocosmosporum cucurbitae), this protein is Cutinase (CUTA).